The primary structure comprises 106 residues: UPF0145 protein APJL_0492 (106 aa).

Belongs to the UPF0145 family.

This Actinobacillus pleuropneumoniae serotype 3 (strain JL03) protein is UPF0145 protein APJL_0492.